The primary structure comprises 175 residues: ATP synthase subunit b, chloroplastic (175 aa).

A helical transmembrane segment spans residues 26–44; the sequence is VINLAVVIGVVVSFVGDAV.

This sequence belongs to the ATPase B chain family. In terms of assembly, F-type ATPases have 2 components, F(1) - the catalytic core - and F(0) - the membrane proton channel. F(1) has five subunits: alpha(3), beta(3), gamma(1), delta(1), epsilon(1). F(0) has four main subunits: a(1), b(1), b'(1) and c(10-14). The alpha and beta chains form an alternating ring which encloses part of the gamma chain. F(1) is attached to F(0) by a central stalk formed by the gamma and epsilon chains, while a peripheral stalk is formed by the delta, b and b' chains.

It is found in the plastid. The protein resides in the chloroplast thylakoid membrane. In terms of biological role, f(1)F(0) ATP synthase produces ATP from ADP in the presence of a proton or sodium gradient. F-type ATPases consist of two structural domains, F(1) containing the extramembraneous catalytic core and F(0) containing the membrane proton channel, linked together by a central stalk and a peripheral stalk. During catalysis, ATP synthesis in the catalytic domain of F(1) is coupled via a rotary mechanism of the central stalk subunits to proton translocation. Functionally, component of the F(0) channel, it forms part of the peripheral stalk, linking F(1) to F(0). The protein is ATP synthase subunit b, chloroplastic of Tupiella akineta (Green alga).